The chain runs to 276 residues: Undecaprenyl-diphosphatase 1 (276 aa).

The next 7 membrane-spanning stretches (helical) occupy residues 4–24 (ILIC…FLPV), 45–62 (KTFD…VCWE), 83–103 (FTLN…LFEK), 108–128 (VLFS…IILW), 187–207 (VATE…TLYE), 217–237 (VDSL…AFVC), and 252–272 (VFAW…YSGW).

Belongs to the UppP family.

The protein resides in the cell inner membrane. The catalysed reaction is di-trans,octa-cis-undecaprenyl diphosphate + H2O = di-trans,octa-cis-undecaprenyl phosphate + phosphate + H(+). Catalyzes the dephosphorylation of undecaprenyl diphosphate (UPP). Confers resistance to bacitracin. This is Undecaprenyl-diphosphatase 1 from Burkholderia ambifaria (strain ATCC BAA-244 / DSM 16087 / CCUG 44356 / LMG 19182 / AMMD) (Burkholderia cepacia (strain AMMD)).